The sequence spans 364 residues: Chorismate synthase (364 aa).

Arg-47 contacts NADP(+). FMN is bound by residues 124 to 126 (RAS), Gly-287, 302 to 306 (KPTAT), and Arg-328.

It belongs to the chorismate synthase family. In terms of assembly, homotetramer. It depends on FMNH2 as a cofactor.

The catalysed reaction is 5-O-(1-carboxyvinyl)-3-phosphoshikimate = chorismate + phosphate. Its pathway is metabolic intermediate biosynthesis; chorismate biosynthesis; chorismate from D-erythrose 4-phosphate and phosphoenolpyruvate: step 7/7. Functionally, catalyzes the anti-1,4-elimination of the C-3 phosphate and the C-6 proR hydrogen from 5-enolpyruvylshikimate-3-phosphate (EPSP) to yield chorismate, which is the branch point compound that serves as the starting substrate for the three terminal pathways of aromatic amino acid biosynthesis. This reaction introduces a second double bond into the aromatic ring system. In Prochlorococcus marinus subsp. pastoris (strain CCMP1986 / NIES-2087 / MED4), this protein is Chorismate synthase.